The primary structure comprises 933 residues: Anoctamin-7 (933 aa).

Topologically, residues 1–355 (MRMAATAWAG…YFAWLGFYTG (355 aa)) are cytoplasmic. Residues 43–101 (ETSSGSHCARSRMLRRRAQEEDSTVLIDVSPPEAEKRGSYGSTAHASEPGGQQAAACRA) are disordered. A helical transmembrane segment spans residues 356 to 376 (WLLPAAVVGTLVFLVGCFLVF). Residues 377–420 (SDIPTQELCGSKDSFEMCPLCLDCPFWLLSSACALAQAGRLFDH) are Extracellular-facing. A helical transmembrane segment spans residues 421–441 (GGTVFFSLFMALWAVLLLEYW). The Cytoplasmic segment spans residues 442–499 (KRKSATLAYRWDCSDYEDTEERPRPQFAASAPMTAPNPITGEDEPYFPERSRARRMLA). A helical transmembrane segment spans residues 500–520 (GSVVIVVMVAVVVMCLVSIIL). Residues 521 to 550 (YRAIMAIVVSRSGNTLLAAWASRIASLTGS) lie on the Extracellular side of the membrane. Residues 551-571 (VVNLVFILILSKIYVSLAHVL) traverse the membrane as a helical segment. At 572–588 (TRWEMHRTQTKFEDAFT) the chain is on the cytoplasmic side. The chain crosses the membrane as a helical span at residues 589-609 (LKVFIFQFVNFYSSPVYIAFF). Topologically, residues 610-714 (KGRFVGYPGN…FDEYLEMVLQ (105 aa)) are extracellular. A helical membrane pass occupies residues 715-735 (FGFVTIFVAACPLAPLFALLN). The Cytoplasmic segment spans residues 736–763 (NWVEIRLDARKFVCEYRRPVAERAQDIG). Residues 764–784 (IWFHILAGLTHLAVISNAFLL) form a helical membrane-spanning segment. At 785–843 (AFSSDFLPRAYYRWTRAHDLRGFLNFTLARAPSSFAAAHNRTCRYRAFRDDDGHYSQTY) the chain is on the extracellular side. 2 N-linked (GlcNAc...) asparagine glycosylation sites follow: Asn-809 and Asn-824. A helical transmembrane segment spans residues 844-864 (WNLLAIRLAFVIVFEHVVFSV). The Cytoplasmic portion of the chain corresponds to 865–933 (GRLLDLLVPD…TVPKASQLQQ (69 aa)). The segment at 902 to 933 (GTNGTKDEQPEGSELSSHWTPFTVPKASQLQQ) is disordered. The segment covering 915–933 (ELSSHWTPFTVPKASQLQQ) has biased composition (polar residues).

The protein belongs to the anoctamin family. In terms of tissue distribution, specifically expressed in epithelial cells of the prostate (at protein level).

It is found in the cell membrane. The protein localises to the cell junction. It localises to the endoplasmic reticulum. Its subcellular location is the cytoplasm. The protein resides in the cytosol. The catalysed reaction is a 1,2-diacyl-sn-glycero-3-phospho-L-serine(in) = a 1,2-diacyl-sn-glycero-3-phospho-L-serine(out). The enzyme catalyses a beta-D-galactosyl-(1&lt;-&gt;1')-N-acylsphing-4-enine(out) = a beta-D-galactosyl-(1&lt;-&gt;1')-N-acylsphing-4-enine(in). It carries out the reaction a 1,2-diacyl-sn-glycero-3-phosphocholine(in) = a 1,2-diacyl-sn-glycero-3-phosphocholine(out). Functionally, has calcium-dependent phospholipid scramblase activity; scrambles phosphatidylserine, phosphatidylcholine and galactosylceramide. Does not exhibit calcium-activated chloride channel (CaCC) activity. May play a role in cell-cell interactions. The sequence is that of Anoctamin-7 (ANO7) from Homo sapiens (Human).